Here is an 85-residue protein sequence, read N- to C-terminus: Insecticidal toxin Vn1 (85 aa).

Residues 1 to 23 form the signal peptide; sequence MFLYRLICLFILICIITVDISTS. Cysteines 71 and 84 form a disulfide.

As to expression, highly expressed in the venom apparatus, and weakly expressed in residual body.

The protein localises to the secreted. Its function is as follows. Endoparasitoid venom toxin that exhibits insecticidal activity against Tenebrio molitor pupae. Impacts genes related to immune response, environmental information processing, metabolism, and response to external stimuli in T.molitor, suggesting its involvement in the intricate parasitoid wasp-host interaction. The sequence is that of Insecticidal toxin Vn1 from Aphidius gifuensis (Parasitoid wasp).